The following is a 356-amino-acid chain: Alanine racemase, catabolic (356 aa).

Lys-35 serves as the catalytic Proton acceptor; specific for D-alanine. Lys-35 bears the N6-(pyridoxal phosphate)lysine mark. Arg-130 contributes to the substrate binding site. Residue Tyr-253 is the Proton acceptor; specific for L-alanine of the active site. Position 301 (Met-301) interacts with substrate.

Belongs to the alanine racemase family. Requires pyridoxal 5'-phosphate as cofactor.

The enzyme catalyses L-alanine = D-alanine. Its function is as follows. Isomerizes L-alanine to D-alanine which is then oxidized to pyruvate by DadA. The chain is Alanine racemase, catabolic (dadX) from Escherichia coli O6:H1 (strain CFT073 / ATCC 700928 / UPEC).